Consider the following 173-residue polypeptide: uncharacterized protein (173 aa).

4 helical membrane passes run 9 to 29 (FSIC…LLCV), 32 to 52 (ICSA…TFFH), 100 to 120 (MFLC…SFIV), and 127 to 147 (FLFL…GLYP).

It localises to the membrane. This is an uncharacterized protein from Saccharomyces cerevisiae (strain ATCC 204508 / S288c) (Baker's yeast).